The chain runs to 317 residues: Glutaminase (317 aa).

Substrate-binding residues include Ser-67, Asn-118, Glu-162, Asn-169, Tyr-193, Tyr-245, and Val-263.

Belongs to the glutaminase family. As to quaternary structure, homotetramer.

The catalysed reaction is L-glutamine + H2O = L-glutamate + NH4(+). The polypeptide is Glutaminase (Brucella canis (strain ATCC 23365 / NCTC 10854 / RM-666)).